The primary structure comprises 361 residues: tRNA-specific 2-thiouridylase MnmA (361 aa).

ATP is bound by residues 8–15 and Met34; that span reads GMSGGVDS. The interval 94-96 is interaction with target base in tRNA; the sequence is NPD. Residue Cys99 is the Nucleophile of the active site. Cysteines 99 and 195 form a disulfide. Gly123 is an ATP binding site. Positions 145–147 are interaction with tRNA; sequence KDQ. Residue Cys195 is the Cysteine persulfide intermediate of the active site. The interaction with tRNA stretch occupies residues 307-308; sequence RY.

The protein belongs to the MnmA/TRMU family.

It localises to the cytoplasm. The catalysed reaction is S-sulfanyl-L-cysteinyl-[protein] + uridine(34) in tRNA + AH2 + ATP = 2-thiouridine(34) in tRNA + L-cysteinyl-[protein] + A + AMP + diphosphate + H(+). Functionally, catalyzes the 2-thiolation of uridine at the wobble position (U34) of tRNA, leading to the formation of s(2)U34. The polypeptide is tRNA-specific 2-thiouridylase MnmA (Legionella pneumophila (strain Lens)).